Consider the following 340-residue polypeptide: Dihydroorotase (340 aa).

Zn(2+)-binding residues include His14 and His16. Substrate-binding positions include 16–18 (HLR) and Asn42. The Zn(2+) site is built by Lys100, His137, and His175. The residue at position 100 (Lys100) is an N6-carboxylysine. His137 is a substrate binding site. Residue Leu220 coordinates substrate. Asp248 provides a ligand contact to Zn(2+). Asp248 is an active-site residue. Residues His252 and Ala264 each contribute to the substrate site.

It belongs to the metallo-dependent hydrolases superfamily. DHOase family. Class II DHOase subfamily. Homodimer. Requires Zn(2+) as cofactor.

It carries out the reaction (S)-dihydroorotate + H2O = N-carbamoyl-L-aspartate + H(+). Its pathway is pyrimidine metabolism; UMP biosynthesis via de novo pathway; (S)-dihydroorotate from bicarbonate: step 3/3. Catalyzes the reversible cyclization of carbamoyl aspartate to dihydroorotate. In Sphingopyxis alaskensis (strain DSM 13593 / LMG 18877 / RB2256) (Sphingomonas alaskensis), this protein is Dihydroorotase.